We begin with the raw amino-acid sequence, 308 residues long: Ycf92-like protein (308 aa).

A run of 5 helical transmembrane segments spans residues 41 to 61 (FANN…TLIA), 75 to 95 (LLTL…GLGV), 153 to 173 (ISTI…TTAP), 192 to 212 (IPVT…PLVL), and 288 to 308 (WLAI…GNQI).

Belongs to the ycf92 family.

Its subcellular location is the membrane. The sequence is that of Ycf92-like protein from Nostoc sp. (strain PCC 7120 / SAG 25.82 / UTEX 2576).